Reading from the N-terminus, the 398-residue chain is Ribosomal RNA small subunit methyltransferase B (398 aa).

Residues 221–227 (CGGAGLK), Asp-242, Asp-268, and Asp-283 contribute to the S-adenosyl-L-methionine site. Cys-336 functions as the Nucleophile in the catalytic mechanism.

It belongs to the class I-like SAM-binding methyltransferase superfamily. RsmB/NOP family.

Its subcellular location is the cytoplasm. The enzyme catalyses cytidine(967) in 16S rRNA + S-adenosyl-L-methionine = 5-methylcytidine(967) in 16S rRNA + S-adenosyl-L-homocysteine + H(+). In terms of biological role, specifically methylates the cytosine at position 967 (m5C967) of 16S rRNA. The protein is Ribosomal RNA small subunit methyltransferase B of Thermus thermophilus (strain ATCC 27634 / DSM 579 / HB8).